We begin with the raw amino-acid sequence, 82 residues long: Small ribosomal subunit protein bS16 (82 aa).

The protein belongs to the bacterial ribosomal protein bS16 family.

The polypeptide is Small ribosomal subunit protein bS16 (Serratia proteamaculans (strain 568)).